Here is a 388-residue protein sequence, read N- to C-terminus: Protein TsgA homolog (388 aa).

12 helical membrane passes run 12–32 (CISF…GIFL), 51–71 (TFLN…TNII), 77–97 (LIFG…SHNL), 102–122 (ISMF…TYII), 137–157 (LTDS…ALII), 163–183 (WYWV…ITIN), 203–223 (FSIL…LSFI), 246–266 (SAFW…LKFF), 272–292 (IITL…FYDY), 294–314 (LLYI…TIII), 331–351 (YILT…GPIV), and 356–376 (IFSA…LVII).

It belongs to the major facilitator superfamily. TsgA family.

The protein localises to the cell membrane. This is Protein TsgA homolog from Buchnera aphidicola subsp. Baizongia pistaciae (strain Bp).